Consider the following 76-residue polypeptide: Sec-independent protein translocase protein TatA (76 aa).

Residues 1–21 (MGGLSIWHWLIVLLIVALVFG) traverse the membrane as a helical segment. Residues 43 to 76 (MKDGDAPADAQQLPRSGTVDVNAKEATRSDSNKA) are disordered. Positions 64-76 (NAKEATRSDSNKA) are enriched in basic and acidic residues.

This sequence belongs to the TatA/E family. As to quaternary structure, the Tat system comprises two distinct complexes: a TatABC complex, containing multiple copies of TatA, TatB and TatC subunits, and a separate TatA complex, containing only TatA subunits. Substrates initially bind to the TatABC complex, which probably triggers association of the separate TatA complex to form the active translocon.

It is found in the cell inner membrane. Its function is as follows. Part of the twin-arginine translocation (Tat) system that transports large folded proteins containing a characteristic twin-arginine motif in their signal peptide across membranes. TatA could form the protein-conducting channel of the Tat system. The chain is Sec-independent protein translocase protein TatA from Burkholderia multivorans (strain ATCC 17616 / 249).